We begin with the raw amino-acid sequence, 368 residues long: Ribulose bisphosphate carboxylase-like protein 1 (368 aa).

This sequence belongs to the RuBisCO large chain family. Type IV subfamily.

In terms of biological role, unknown. Probably does not have RuBisCO activity. This is Ribulose bisphosphate carboxylase-like protein 1 (rlp1) from Rhodopseudomonas palustris (strain ATCC BAA-98 / CGA009).